The primary structure comprises 204 residues: Methyl-CpG-binding domain protein 3-like 2B (204 aa).

The segment covering 126–137 has biased composition (basic and acidic residues); sequence SLDRAGAERVRS. The segment at 126 to 145 is disordered; it reads SLDRAGAERVRSPLEPTPGR.

This sequence belongs to the MBD3L family.

The polypeptide is Methyl-CpG-binding domain protein 3-like 2B (Homo sapiens (Human)).